Here is a 102-residue protein sequence, read N- to C-terminus: Large ribosomal subunit protein bL21 (102 aa).

The protein belongs to the bacterial ribosomal protein bL21 family. In terms of assembly, part of the 50S ribosomal subunit. Contacts protein L20.

Its function is as follows. This protein binds to 23S rRNA in the presence of protein L20. This chain is Large ribosomal subunit protein bL21, found in Geobacter metallireducens (strain ATCC 53774 / DSM 7210 / GS-15).